The following is a 393-amino-acid chain: S-adenosylmethionine synthase (393 aa).

A Mg(2+)-binding site is contributed by glutamate 9. An ATP-binding site is contributed by histidine 15. Glutamate 43 provides a ligand contact to K(+). Glutamate 56 and glutamine 99 together coordinate L-methionine. ATP contacts are provided by residues 167–169 (DGK), 235–238 (SGRF), aspartate 246, 252–253 (RK), alanine 269, lysine 273, and lysine 277. Aspartate 246 is an L-methionine binding site. Lysine 277 provides a ligand contact to L-methionine.

Belongs to the AdoMet synthase family. Homotetramer. The cofactor is Mn(2+). Mg(2+) is required as a cofactor. Co(2+) serves as cofactor. Requires K(+) as cofactor.

Its subcellular location is the cytoplasm. The catalysed reaction is L-methionine + ATP + H2O = S-adenosyl-L-methionine + phosphate + diphosphate. It functions in the pathway amino-acid biosynthesis; S-adenosyl-L-methionine biosynthesis; S-adenosyl-L-methionine from L-methionine: step 1/1. Its function is as follows. Catalyzes the formation of S-adenosylmethionine from methionine and ATP. The reaction comprises two steps that are both catalyzed by the same enzyme: formation of S-adenosylmethionine (AdoMet) and triphosphate, and subsequent hydrolysis of the triphosphate. This chain is S-adenosylmethionine synthase (SAMS), found in Gossypium hirsutum (Upland cotton).